The primary structure comprises 219 residues: Flagellar biosynthetic protein FliZ (219 aa).

Positions 1 to 26 (MKKSQYFIVFICFFVLFSVHPIAAAA) are cleaved as a signal peptide. Basic and acidic residues predominate over residues 41–61 (KDEKTADQSEQKKEKTTKTAD). Residues 41–62 (KDEKTADQSEQKKEKTTKTADE) form a disordered region. A helical transmembrane segment spans residues 71-96 (VSAFDFVKMIFALLFVIVLIYGLVKL). The segment covering 200–212 (LEELKQNRSEGKK) has biased composition (basic and acidic residues). Positions 200–219 (LEELKQNRSEGKKKGPRHHE) are disordered.

It localises to the cell membrane. Functionally, may be a structural component of the flagellum that anchors the rod to the membrane. In Bacillus subtilis (strain 168), this protein is Flagellar biosynthetic protein FliZ (fliZ).